A 164-amino-acid chain; its full sequence is Crossover junction endodeoxyribonuclease RuvC (164 aa).

Active-site residues include Asp-7, Glu-67, and Asp-139. Mg(2+)-binding residues include Asp-7, Glu-67, and Asp-139.

The protein belongs to the RuvC family. In terms of assembly, homodimer which binds Holliday junction (HJ) DNA. The HJ becomes 2-fold symmetrical on binding to RuvC with unstacked arms; it has a different conformation from HJ DNA in complex with RuvA. In the full resolvosome a probable DNA-RuvA(4)-RuvB(12)-RuvC(2) complex forms which resolves the HJ. It depends on Mg(2+) as a cofactor.

Its subcellular location is the cytoplasm. It catalyses the reaction Endonucleolytic cleavage at a junction such as a reciprocal single-stranded crossover between two homologous DNA duplexes (Holliday junction).. In terms of biological role, the RuvA-RuvB-RuvC complex processes Holliday junction (HJ) DNA during genetic recombination and DNA repair. Endonuclease that resolves HJ intermediates. Cleaves cruciform DNA by making single-stranded nicks across the HJ at symmetrical positions within the homologous arms, yielding a 5'-phosphate and a 3'-hydroxyl group; requires a central core of homology in the junction. The consensus cleavage sequence is 5'-(A/T)TT(C/G)-3'. Cleavage occurs on the 3'-side of the TT dinucleotide at the point of strand exchange. HJ branch migration catalyzed by RuvA-RuvB allows RuvC to scan DNA until it finds its consensus sequence, where it cleaves and resolves the cruciform DNA. This Geobacter sp. (strain M21) protein is Crossover junction endodeoxyribonuclease RuvC.